The chain runs to 70 residues: MLKMGVVLFIFLVLFPLATLQLDADQPVERYAKNKQLFNPHKRRGIILRAPGKRCCHWNWCDHLCSCCGS.

The first 24 residues, 1 to 24 (MLKMGVVLFIFLVLFPLATLQLDA), serve as a signal peptide directing secretion. Positions 25 to 54 (DQPVERYAKNKQLFNPHKRRGIILRAPGKR) are excised as a propeptide. Intrachain disulfides connect cysteine 55–cysteine 67, cysteine 56–cysteine 68, and cysteine 61–cysteine 65.

It belongs to the conotoxin M superfamily. In terms of tissue distribution, expressed by the venom duct.

It is found in the secreted. Its function is as follows. In vitro, inhibits proliferation of the mice ovarian cancer cells ID8. This Conus marmoreus (Marble cone) protein is Conotoxin Mr3.8.